A 233-amino-acid polypeptide reads, in one-letter code: Lipoprotein-releasing system ATP-binding protein LolD (233 aa).

The ABC transporter domain occupies 6–233 (LQCDNLCKRY…TAELSLMGAE (228 aa)). An ATP-binding site is contributed by 42 to 49 (GSSGSGKS).

The protein belongs to the ABC transporter superfamily. Lipoprotein translocase (TC 3.A.1.125) family. The complex is composed of two ATP-binding proteins (LolD) and two transmembrane proteins (LolC and LolE).

The protein resides in the cell inner membrane. Part of the ABC transporter complex LolCDE involved in the translocation of mature outer membrane-directed lipoproteins, from the inner membrane to the periplasmic chaperone, LolA. Responsible for the formation of the LolA-lipoprotein complex in an ATP-dependent manner. This is Lipoprotein-releasing system ATP-binding protein LolD from Shigella flexneri.